A 428-amino-acid polypeptide reads, in one-letter code: Light-independent protochlorophyllide reductase subunit N (428 aa).

[4Fe-4S] cluster is bound by residues Cys-16, Cys-41, and Cys-102.

It belongs to the BchN/ChlN family. Protochlorophyllide reductase is composed of three subunits; ChlL, ChlN and ChlB. Forms a heterotetramer of two ChlB and two ChlN subunits. It depends on [4Fe-4S] cluster as a cofactor.

The enzyme catalyses chlorophyllide a + oxidized 2[4Fe-4S]-[ferredoxin] + 2 ADP + 2 phosphate = protochlorophyllide a + reduced 2[4Fe-4S]-[ferredoxin] + 2 ATP + 2 H2O. The protein operates within porphyrin-containing compound metabolism; chlorophyll biosynthesis (light-independent). Its function is as follows. Component of the dark-operative protochlorophyllide reductase (DPOR) that uses Mg-ATP and reduced ferredoxin to reduce ring D of protochlorophyllide (Pchlide) to form chlorophyllide a (Chlide). This reaction is light-independent. The NB-protein (ChlN-ChlB) is the catalytic component of the complex. This is Light-independent protochlorophyllide reductase subunit N from Synechococcus sp. (strain CC9311).